Consider the following 327-residue polypeptide: Cobalamin biosynthesis protein CobD (327 aa).

The next 4 helical transmembrane spans lie at 63–83, 84–104, 158–178, and 305–325; these read VGILVLLAGATALGVVLARLF, DVLGALGSLLEVVTVAVFLAQ, FSDGVVAPAFWYAVAGLPGLL, and VFYAACSVMTFAFAAAALPLL.

It belongs to the CobD/CbiB family.

Its subcellular location is the cell membrane. The protein operates within cofactor biosynthesis; adenosylcobalamin biosynthesis. Converts cobyric acid to cobinamide by the addition of aminopropanol on the F carboxylic group. The protein is Cobalamin biosynthesis protein CobD of Rhizobium meliloti (strain 1021) (Ensifer meliloti).